The chain runs to 1400 residues: ABC transporter G family member 30 (1400 aa).

N-linked (GlcNAc...) asparagine glycosylation is present at Asn-116. One can recognise an ABC transporter 1 domain in the interval 141 to 414; sequence LLSEFICSKK…FEEFGFKCPE (274 aa). 174–181 provides a ligand contact to ATP; the sequence is GPPGCGKT. N-linked (GlcNAc...) asparagine glycosylation occurs at Asn-472. The ABC transmembrane type-2 1 domain occupies 492–704; that stretch reads EMLKACSRRE…AEIGLTANEF (213 aa). Transmembrane regions (helical) follow at residues 510–530, 553–573, 582–602, 628–648, 652–672, 679–699, and 738–758; these read FIYLFKSALLVFNALVTMTVF, LFRLLADGLPELTLTISRLGV, FYPAWAYAIPSIILKIPLSVL, FLILSTFNLSCVSMFRAIAAI, IIASTITGAISILVLSLFGGF, MPAWLGWGFWLSPLSYAEIGL, and TAFGALVGFVLFFNALYVLAL. The ABC transporter 2 domain maps to 808–1053; it reads VTFQNVQYYI…VIEYFESFSG (246 aa). 845–852 is an ATP binding site; it reads GVSGAGKT. N-linked (GlcNAc...) asparagine glycosylation is found at Asn-899 and Asn-1040. The 215-residue stretch at 1125-1339 folds into the ABC transmembrane type-2 2 domain; it reads VQLKACLWKQ…VLEGLLSSQY (215 aa). The next 7 membrane-spanning stretches (helical) occupy residues 1144–1164, 1179–1199, 1228–1248, 1263–1283, 1289–1309, 1317–1337, and 1372–1392; these read HNITRIVFILLDSTLCGLLFW, IFGSMYTLVVFPGMNNCAAVI, VLIEVPYSLLQSLLCTIIVYP, LYSIFCSLLIFNYSGMLMVAL, MAVTLRSSFFSMLNLFAGFVI, WWIWMYYLSPTSWVLEGLLSS, and VVAFVLIAYPIIVATLFAFFM.

It belongs to the ABC transporter superfamily. ABCG family. PDR (TC 3.A.1.205) subfamily. Confined to roots. In seeds, mainly expressed in the embryo and, to a lesser extent, in the endosperm.

It localises to the cell membrane. The enzyme catalyses abscisate(out) + ATP + H2O = abscisate(in) + ADP + phosphate + H(+). In terms of biological role, together with ABCG40, import into the embryo the abscisic acid (ABA) delivered from the endosperm via ABCG25 and ABCG31-mediated export to suppress radicle extension and subsequent embryonic growth. Involved in root secretion of phytochemicals (phenolics and sugars) which regulate soil microbiota, influencing both fungal and bacterial communities. May be a general defense protein. The sequence is that of ABC transporter G family member 30 from Arabidopsis thaliana (Mouse-ear cress).